The chain runs to 635 residues: tRNA 5-methylaminomethyl-2-thiouridine biosynthesis bifunctional protein MnmC (635 aa).

The segment at 1-227 (MSEPIDWLPD…KRSNLQAEFD (227 aa)) is tRNA (mnm(5)s(2)U34)-methyltransferase. Residues 254-635 (IGGGLSGAAV…ALSTERLPAD (382 aa)) form an FAD-dependent cmnm(5)s(2)U34 oxidoreductase region.

The protein in the N-terminal section; belongs to the methyltransferase superfamily. tRNA (mnm(5)s(2)U34)-methyltransferase family. It in the C-terminal section; belongs to the DAO family. Requires FAD as cofactor.

It is found in the cytoplasm. The catalysed reaction is 5-aminomethyl-2-thiouridine(34) in tRNA + S-adenosyl-L-methionine = 5-methylaminomethyl-2-thiouridine(34) in tRNA + S-adenosyl-L-homocysteine + H(+). Its function is as follows. Catalyzes the last two steps in the biosynthesis of 5-methylaminomethyl-2-thiouridine (mnm(5)s(2)U) at the wobble position (U34) in tRNA. Catalyzes the FAD-dependent demodification of cmnm(5)s(2)U34 to nm(5)s(2)U34, followed by the transfer of a methyl group from S-adenosyl-L-methionine to nm(5)s(2)U34, to form mnm(5)s(2)U34. The polypeptide is tRNA 5-methylaminomethyl-2-thiouridine biosynthesis bifunctional protein MnmC (Paracidovorax citrulli (strain AAC00-1) (Acidovorax citrulli)).